Here is a 174-residue protein sequence, read N- to C-terminus: Adenylate kinase (174 aa).

An NMP region spans residues 12–41 (STGDMLRAAIKAGTPLGLEAKKIIDEGGLV). Residues Thr13, Arg18, 39-41 (GLV), 67-70 (GFPR), and Gln74 contribute to the AMP site. Positions 104–141 (GRRVHLASGRTYHIAYNPPKVEGKDDVTGEDLIQRDDD) are LID. ATP contacts are provided by residues Arg105 and 114-115 (TY). The AMP site is built by Arg138 and Arg149.

It belongs to the adenylate kinase family. In terms of assembly, monomer.

It localises to the cytoplasm. It carries out the reaction AMP + ATP = 2 ADP. It participates in purine metabolism; AMP biosynthesis via salvage pathway; AMP from ADP: step 1/1. Catalyzes the reversible transfer of the terminal phosphate group between ATP and AMP. Plays an important role in cellular energy homeostasis and in adenine nucleotide metabolism. In Neisseria animalis, this protein is Adenylate kinase.